The sequence spans 119 residues: Chorion class CA protein ERA.2 (119 aa).

A signal peptide spans 1–21 (MSKLVVFLFCIQVCFIQNVYS). The tract at residues 22–55 (QCLGRVGPGGPPLGPYGGPLGGPGYGPVGYGGCG) is left arm. The segment at 56 to 103 (GYGGSGIGNVAVAGELPVAGSTGVTGQVPVIGAVEFAGPACAVGSVSI) is central domain. Residues 104 to 119 (SGACGPTCGCGGSPFY) form a right arm region.

The protein belongs to the chorion protein family.

Functionally, this protein is one of many from the eggshell of the silk moth. This is Chorion class CA protein ERA.2 (ERA.2) from Bombyx mori (Silk moth).